Consider the following 207-residue polypeptide: MAKLDVFDIKKAKVGEIELDDAVFNDDVREYLIHEAVKIQLANRRQGTVAVKNRALVAGSGKKPFKQKGTGQARQGCRRAPQYPGGGVAFGPQPKDYNLSMNKKARKAALRSALSMLYKKDAITVVNSLELPSIKTKAFVEVLTAFNLDKTLVITDTATPTLELSARNVKHVKVLGPEGLNIFDIMKYQSVVFTEAAVRRVEGALQS.

A disordered region spans residues 62 to 85 (KKPFKQKGTGQARQGCRRAPQYPG).

It belongs to the universal ribosomal protein uL4 family. As to quaternary structure, part of the 50S ribosomal subunit.

One of the primary rRNA binding proteins, this protein initially binds near the 5'-end of the 23S rRNA. It is important during the early stages of 50S assembly. It makes multiple contacts with different domains of the 23S rRNA in the assembled 50S subunit and ribosome. In terms of biological role, forms part of the polypeptide exit tunnel. This chain is Large ribosomal subunit protein uL4, found in Geobacter sp. (strain M21).